We begin with the raw amino-acid sequence, 252 residues long: 2-succinyl-6-hydroxy-2,4-cyclohexadiene-1-carboxylate synthase (252 aa).

This sequence belongs to the AB hydrolase superfamily. MenH family. Monomer.

The enzyme catalyses 5-enolpyruvoyl-6-hydroxy-2-succinyl-cyclohex-3-ene-1-carboxylate = (1R,6R)-6-hydroxy-2-succinyl-cyclohexa-2,4-diene-1-carboxylate + pyruvate. It functions in the pathway quinol/quinone metabolism; 1,4-dihydroxy-2-naphthoate biosynthesis; 1,4-dihydroxy-2-naphthoate from chorismate: step 3/7. Its pathway is quinol/quinone metabolism; menaquinone biosynthesis. Its function is as follows. Catalyzes a proton abstraction reaction that results in 2,5-elimination of pyruvate from 2-succinyl-5-enolpyruvyl-6-hydroxy-3-cyclohexene-1-carboxylate (SEPHCHC) and the formation of 2-succinyl-6-hydroxy-2,4-cyclohexadiene-1-carboxylate (SHCHC). This chain is 2-succinyl-6-hydroxy-2,4-cyclohexadiene-1-carboxylate synthase, found in Salmonella choleraesuis (strain SC-B67).